The primary structure comprises 580 residues: Anaphase-promoting complex subunit 7 (580 aa).

TPR repeat units lie at residues 50–83 (IISFSLFGDSLFGKNEFVRSLKYFKQSLDILFKV), 107–140 (YELKYKISLCYIKINRNNLAISYLESIPFSSRGL), 141–175 (DTHLTIARLYKDIGKEKSKECIISYKEVIKLCPLC), 253–286 (VLEKLALSYLYHDEPSIINTFNIFQKIRLLDPYY), 321–354 (AETWTSVALFYFLKENVEKSLENVDRAISIKESH), 356–388 (FAHSLKGEILLSLDEPREALPSLERAFQLSKNI), 390–421 (TARELVRCHLILNQMKEALVVAETINNLSPDY), 422–456 (SKTMALLGMVLANQPEEREEARKILTKALTLSPHC), 458–490 (DTVLTLSKLNVVEGRFQEAIDILNSQLEYQETD), and 491–523 (LMHTEIAGVYLTKDYHEDAMIHYNSALEINPQY). The tract at residues 539 to 580 (GIDPDQELDQENDDDDQEEGEGENDQEENDDDDNDDDDEYIS) is disordered. Residues 542 to 580 (PDQELDQENDDDDQEEGEGENDQEENDDDDNDDDDEYIS) are compositionally biased toward acidic residues.

It belongs to the APC7 family. As to quaternary structure, the APC/C is composed of at least 13 subunits that stay tightly associated throughout the cell cycle: anapc1, anapc2, anapc3, anapc4, anapc5, anapc6, anapc7, anapc8, anapc10, anapc11, cdc20, cdc26 and cdh1.

The protein localises to the nucleus. It participates in protein modification; protein ubiquitination. Its function is as follows. Component of the anaphase promoting complex/cyclosome (APC/C), a cell cycle-regulated E3 ubiquitin-protein ligase complex that controls progression through mitosis and the G1 phase of the cell cycle. In Dictyostelium discoideum (Social amoeba), this protein is Anaphase-promoting complex subunit 7 (anapc7).